Reading from the N-terminus, the 286-residue chain is NAD(P)H azoreductase (286 aa).

NADP(+) contacts are provided by residues 6–11, Arg31, and 136–141; these read GGTGTI and GFFMQN.

Belongs to the NmrA-type oxidoreductase family. Azoreductase type 3 subfamily. In terms of assembly, monomer.

Its function is as follows. Catalyzes the reductive cleavage of azo bond in aromatic azo compounds to the corresponding amines. Uses preferentially NADPH rather than NADH as an electron donor for its activity. The enzyme reductively cleaved Orange II and carboxy-Orange II, and can also reduce several sulfonated structural analogs, which carry a hydroxy group in the 2 position of the naphthol ring. The sequence is that of NAD(P)H azoreductase (azoB) from Xenophilus azovorans.